The following is a 490-amino-acid chain: Katanin p60 ATPase-containing subunit A-like 1 (490 aa).

Met1 carries the N-acetylmethionine modification. The disordered stretch occupies residues 96-182 (PAVWPPPVPA…ASDGEIPKFD (87 aa)). The span at 116–127 (PNREVRPLRKEM) shows a compositional bias: basic and acidic residues. The segment covering 128–139 (AGVGARGPVGRA) has biased composition (low complexity). The segment covering 143-169 (SKSEKPSASRDKDCRARGRDDKGRKNM) has biased composition (basic and acidic residues). At Ser174 the chain carries Phosphoserine. 248–255 (GPPGTGKT) is a binding site for ATP.

It belongs to the AAA ATPase family. Katanin p60 subunit A1 subfamily. A-like 1 sub-subfamily. As to quaternary structure, interacts with KATNB1 and KATNBL1.

It localises to the cytoplasm. The protein localises to the cytoskeleton. It is found in the spindle pole. The protein resides in the spindle. The enzyme catalyses n ATP + n H2O + a microtubule = n ADP + n phosphate + (n+1) alpha/beta tubulin heterodimers.. Its function is as follows. Regulates microtubule dynamics in Sertoli cells, a process that is essential for spermiogenesis and male fertility. Severs microtubules in an ATP-dependent manner, promoting rapid reorganization of cellular microtubule arrays. Has microtubule-severing activity in vitro. This is Katanin p60 ATPase-containing subunit A-like 1 from Oryctolagus cuniculus (Rabbit).